The primary structure comprises 237 residues: Lysophospholipase-like protein 1 (237 aa).

An N-acetylalanine modification is found at Ala-2. Active-site charge relay system residues include Ser-124, Asp-179, and His-211.

It belongs to the AB hydrolase superfamily. AB hydrolase 2 family.

The protein resides in the cytoplasm. The protein localises to the cytosol. It carries out the reaction S-hexadecanoyl-L-cysteinyl-[protein] + H2O = L-cysteinyl-[protein] + hexadecanoate + H(+). Functionally, palmitoyl thioesterase that catalyzes depalmitoylation of CGAS and KCNMA1. Acts as a regulator of innate immunity by mediating depalmitoylation of CGAS, thereby preventing CGAS homodimerization and cyclic GMP-AMP synthase activity. Does not exhibit phospholipase nor triacylglycerol lipase activity, able to hydrolyze only short chain substrates due to its shallow active site. This chain is Lysophospholipase-like protein 1, found in Pongo abelii (Sumatran orangutan).